Reading from the N-terminus, the 215-residue chain is Urease accessory protein UreG 2 (215 aa).

Position 11-18 (glycine 11–threonine 18) interacts with GTP.

Belongs to the SIMIBI class G3E GTPase family. UreG subfamily. In terms of assembly, homodimer. UreD, UreF and UreG form a complex that acts as a GTP-hydrolysis-dependent molecular chaperone, activating the urease apoprotein by helping to assemble the nickel containing metallocenter of UreC. The UreE protein probably delivers the nickel.

The protein resides in the cytoplasm. Functionally, facilitates the functional incorporation of the urease nickel metallocenter. This process requires GTP hydrolysis, probably effectuated by UreG. The chain is Urease accessory protein UreG 2 from Methylorubrum extorquens (strain PA1) (Methylobacterium extorquens).